We begin with the raw amino-acid sequence, 241 residues long: Tumor necrosis factor receptor superfamily member 18 (241 aa).

The signal sequence occupies residues 1 to 25 (MAQHGAMGAFRALCGLALLCALSLG). Residues 26–162 (QRPTGGPGCG…CVPGSPPAEP (137 aa)) are Extracellular-facing. 5 disulfides stabilise this stretch: C34-C49, C74-C86, C81-C94, C115-C134, and C128-C153. TNFR-Cys repeat units lie at residues 34–72 (CGPG…EWDC), 74–112 (CVQP…GFQC), and 115–153 (CASG…NAVC). A glycan (N-linked (GlcNAc...) asparagine) is linked at N146. A helical transmembrane segment spans residues 163-183 (LGWLTVVLLAVAACVLLLTSA). The Cytoplasmic segment spans residues 184–241 (QLGLHIWQLRSQCMWPRETQLLLEVPPSTEDARSCQFPEEERGERSAEEKGRLGDLWV). Residues 214 to 241 (DARSCQFPEEERGERSAEEKGRLGDLWV) form a disordered region. The span at 222-241 (EEERGERSAEEKGRLGDLWV) shows a compositional bias: basic and acidic residues.

In terms of assembly, binds to TRAF1, TRAF2, and TRAF3, but not TRAF5 and TRAF6. Binds through its C-terminus to SIVA1/SIVA. Expressed in lymph node, peripheral blood leukocytes and weakly in spleen.

The protein localises to the cell membrane. The protein resides in the secreted. Its function is as follows. Receptor for TNFSF18. Seems to be involved in interactions between activated T-lymphocytes and endothelial cells and in the regulation of T-cell receptor-mediated cell death. Mediated NF-kappa-B activation via the TRAF2/NIK pathway. In Homo sapiens (Human), this protein is Tumor necrosis factor receptor superfamily member 18 (TNFRSF18).